The primary structure comprises 892 residues: Protein BNI4 (892 aa).

Ser43 and Ser133 each carry phosphoserine. Disordered regions lie at residues 185 to 287 and 305 to 387; these read DFLS…EDTS and KPVI…QDTE. A compositionally biased stretch (basic and acidic residues) spans 208–223; that stretch reads TILERDNNLPVKREEN. Polar residues-rich tracts occupy residues 224–236 and 270–280; these read TIIN…TTHS and DSSAQRTTSAG. Ser281 carries the post-translational modification Phosphoserine. Positions 309-335 are enriched in polar residues; it reads GNNSVTNEKNKMSSSSTFSMNIQTSLK. Residues 346 to 356 are compositionally biased toward low complexity; sequence SSSSIFNSFLK. Residues 357-371 are compositionally biased toward basic and acidic residues; the sequence is GKIETSDSPRKEPMR. 2 positions are modified to phosphoserine: Ser364 and Ser394. At Thr410 the chain carries Phosphothreonine. Phosphoserine is present on residues Ser476, Ser500, and Ser503. 3 disordered regions span residues 506–526, 618–644, and 685–734; these read RTRS…RSLT, SDEE…SERQ, and YATE…GDER. At Ser618 the chain carries Phosphoserine. Residues 624-643 show a composition bias toward basic and acidic residues; the sequence is EVERDVPKPREEPLKKDSER. At Thr703 the chain carries Phosphothreonine. The segment covering 707 to 719 has biased composition (basic and acidic residues); sequence RNNKEDSYKERET. A phosphoserine mark is found at Ser746 and Ser825.

As to quaternary structure, may interact with CHS3 and seems to be an adapter (along with SKT5) to link CHS3 to septins.

This chain is Protein BNI4 (BNI4), found in Saccharomyces cerevisiae (strain ATCC 204508 / S288c) (Baker's yeast).